The primary structure comprises 89 residues: cAMP-regulated phosphoprotein 21 (89 aa).

Residues 1–89 form a disordered region; the sequence is MSEQGDLNQA…GGESLQDQTL (89 aa). An N-acetylserine modification is found at Ser2. Residues 9–25 are compositionally biased toward low complexity; sequence QAIAEEGGTEQETATPE. A Phosphoserine modification is found at Ser33. A compositionally biased stretch (basic and acidic residues) spans 40–53; sequence LELQRRLEAQNQER. Position 56 is a phosphoserine (Ser56).

In terms of assembly, interacts with CALM1. Post-translationally, phosphorylation at Ser-56 favors interaction with CALM1.

The protein resides in the cytoplasm. In terms of biological role, may act as a competitive inhibitor of calmodulin-dependent enzymes such as calcineurin in neurons. This Pongo abelii (Sumatran orangutan) protein is cAMP-regulated phosphoprotein 21 (ARPP21).